The sequence spans 319 residues: Zinc finger protein-like 1 homolog (319 aa).

A B box-type; degenerate zinc finger spans residues 1-43; sequence MGLCKCPKRKVTNLFCYEHRVNVCEFCLVDNHPNCVVQSYLNW. An RING-type; atypical zinc finger spans residues 53–101; that stretch reads CSLCHTTLTQGETIRLNCLHLLHWRCFDDWAASFPPTTAPAGYRCPCCS. A disordered region spans residues 212 to 232; sequence ESSSDTRPLLRQDRDADNEEN. A compositionally biased stretch (basic and acidic residues) spans 219–232; sequence PLLRQDRDADNEEN. The chain crosses the membrane as a helical span at residues 264 to 284; that stretch reads KMAIFVMFLALLALITIITVL.

It belongs to the ZFPL1 family.

Its subcellular location is the membrane. The sequence is that of Zinc finger protein-like 1 homolog from Caenorhabditis briggsae.